A 1072-amino-acid polypeptide reads, in one-letter code: Neurofilament heavy polypeptide (1072 aa).

The residue at position 74 (S74) is a Phosphoserine. Positions 94–409 (EKEQLQALND…KLLEGEECRI (316 aa)) constitute an IF rod domain. 3 coiled-coil regions span residues 98-132 (LQALNDRFAGYIDKVRQLEAHNRTLEGEAAALRQQ), 174-222 (IAHV…LQEE), and 293-380 (LDRL…QLRE). Residues 278-643 (TVQSTLQSEE…AKSPAEAKSP (366 aa)) are 55 X 6 AA approximate tandem repeats of K-S-P-[VAGSE]-[KEVTSGA]-[EAVK]. A phosphoserine mark is found at S343, S414, and S417. The interval 454–1072 (EEQTEEIQVT…PEDKAAKGDK (619 aa)) is disordered. Residues 455-487 (EQTEEIQVTEEVTEEEDKEAQGEEEEEAEEGGE) show a composition bias toward acidic residues. Low complexity predominate over residues 488–499 (EAATTSPPAEEA). The residue at position 501 (S501) is a Phosphoserine. Over residues 501 to 584 (SPEKETKSPV…KSPAEAKSPA (84 aa)) the composition is skewed to basic and acidic residues. 36 consecutive repeat copies span residues 507–512 (KSPVKE), 515–520 (KSPAEA), 521–526 (KSPAEA), 527–532 (KSPAEA), 533–538 (KSPAEV), 539–544 (KSPAEV), 545–550 (KSPAEA), 551–556 (KSPAEA), 557–562 (KSPAEV), 563–568 (KSPAEV), 569–574 (KSPAEA), 575–580 (KSPAEA), 581–586 (KSPAEV), 587–592 (KSPATV), 593–598 (KSPGEA), 599–604 (KSPAEA), 605–610 (KSPAEV), 611–616 (KSPVEA), 617–622 (KSPAEA), 623–628 (KSPASV), 629–634 (KSPGEA), 635–640 (KSPAEA), 641–646 (KSPAEV), 647–652 (KSPATV), 653–658 (KSPVEA), 659–664 (KSPAEV), 665–670 (KSPVTV), 671–676 (KSPAEA), 677–682 (KSPVEV), 683–688 (KSPASV), 689–694 (KSPSEA), 695–700 (KSPAGA), 701–706 (KSPAEA), 707–712 (KSPVVA), 713–718 (KSPAEA), and 719–724 (KSPAEA). 37 positions are modified to phosphoserine: S516, S522, S528, S534, S540, S546, S552, S558, S564, S570, S576, S582, S588, S594, S600, S606, S612, S618, S624, S627, S630, S636, S642, S648, S654, S660, S666, S672, S678, S684, S687, S690, S696, S702, S708, S714, and S720. Positions 600–620 (SPAEAKSPAEVKSPVEAKSPA) are enriched in basic and acidic residues. Positions 621–631 (EAKSPASVKSP) are enriched in low complexity. The segment covering 720–774 (SPAEAKPPAEAKSPAEAKSPAEAKSPAEAKSPAEAKSPVEVKSPEKAKSPVKEGA) has biased composition (basic and acidic residues). The 37; approximate repeat unit spans residues 725–730 (KPPAEA). 7 tandem repeats follow at residues 731–736 (KSPAEA), 737–742 (KSPAEA), 743–748 (KSPAEA), 749–754 (KSPAEA), 755–760 (KSPVEV), 761–766 (KSPEKA), and 767–772 (KSPVKE). Phosphoserine occurs at positions 732, 738, 744, 750, 756, and 762. A 45; approximate repeat occupies 775 to 780 (KSLAEA). 3 positions are modified to phosphoserine: S776, S782, and S788. 2 tandem repeats follow at residues 781 to 786 (KSPEKA) and 787 to 792 (KSPVKE). Composition is skewed to basic and acidic residues over residues 781–953 (KSPE…KAAA) and 963–1072 (GVKE…KGDK). The stretch at 795-800 (KPPAEV) is one 48; approximate repeat. 4 repeat units span residues 801–806 (KSPEKA), 807–812 (KSPMKE), 815–820 (KSPEKA), and 826–831 (KSPEAK). A phosphoserine mark is found at S802, S808, S816, and S827. T832 is subject to Phosphothreonine. S846, S852, S860, S880, and S937 each carry phosphoserine. 3 repeat units span residues 851–856 (KSPAKE), 859–864 (KSPEKE), and 879–884 (KSPVEE).

The protein belongs to the intermediate filament family. As to quaternary structure, forms heterodimers with NEFL; which can further hetero-oligomerize (in vitro). Forms heterodimers with INA (in vitro). Post-translationally, there are a number of repeats of the tripeptide K-S-P, NFH is phosphorylated on a number of the serines in this motif. It is thought that phosphorylation of NFH results in the formation of interfilament cross bridges that are important in the maintenance of axonal caliber. Phosphorylation seems to play a major role in the functioning of the larger neurofilament polypeptides (NF-M and NF-H), the levels of phosphorylation being altered developmentally and coincidentally with a change in the neurofilament function. In terms of processing, phosphorylated in the head and rod regions by the PKC kinase PKN1, leading to the inhibition of polymerization. As to expression, expressed in the dorsal root ganglion neurons (at protein level). Expressed in cutaneous and muscular sensory neurons.

It is found in the cytoplasm. The protein resides in the cytoskeleton. The protein localises to the cell projection. It localises to the axon. Functionally, neurofilaments usually contain three intermediate filament proteins: NEFL, NEFM, and NEFH which are involved in the maintenance of neuronal caliber. NEFH has an important function in mature axons that is not subserved by the two smaller NEF proteins. May additionally cooperate with the neuronal intermediate filament proteins PRPH and INA to form neuronal filamentous networks. The protein is Neurofilament heavy polypeptide (Nefh) of Rattus norvegicus (Rat).